The primary structure comprises 449 residues: Glutamyl-tRNA(Gln) amidotransferase subunit A (449 aa).

Active-site charge relay system residues include Lys51 and Ser126. The segment at 103 to 128 (STTESSAHGKTLNPVDSSRVPGGSSG) is disordered. Over residues 119 to 128 (SSRVPGGSSG) the composition is skewed to low complexity. Ser150 (acyl-ester intermediate) is an active-site residue.

The protein belongs to the amidase family. GatA subfamily. As to quaternary structure, heterotrimer of A, B and C subunits.

It carries out the reaction L-glutamyl-tRNA(Gln) + L-glutamine + ATP + H2O = L-glutaminyl-tRNA(Gln) + L-glutamate + ADP + phosphate + H(+). Functionally, allows the formation of correctly charged Gln-tRNA(Gln) through the transamidation of misacylated Glu-tRNA(Gln) in organisms which lack glutaminyl-tRNA synthetase. The reaction takes place in the presence of glutamine and ATP through an activated gamma-phospho-Glu-tRNA(Gln). In Wolinella succinogenes (strain ATCC 29543 / DSM 1740 / CCUG 13145 / JCM 31913 / LMG 7466 / NCTC 11488 / FDC 602W) (Vibrio succinogenes), this protein is Glutamyl-tRNA(Gln) amidotransferase subunit A.